The following is a 149-amino-acid chain: MNRITNNKTIWIKPKYVEKKWYVIDASDKVLGRIATEAVKILRGKHKPYYTPHQDLGDNVIIVNASKIRLTGKKYSQKIYYRHSRYPGGLYSDTFRTLSERKPTAPLEIAIKGMLPKGPLGRELFRNLKVFADSNHTLKAQNLYKLEAN.

The protein belongs to the universal ribosomal protein uL13 family. Part of the 50S ribosomal subunit.

This protein is one of the early assembly proteins of the 50S ribosomal subunit, although it is not seen to bind rRNA by itself. It is important during the early stages of 50S assembly. The chain is Large ribosomal subunit protein uL13 from Borrelia hermsii (strain HS1 / DAH).